Reading from the N-terminus, the 125-residue chain is Small ribosomal subunit protein uS13 (125 aa).

The protein belongs to the universal ribosomal protein uS13 family. Part of the 30S ribosomal subunit. Forms a loose heterodimer with protein S19. Forms two bridges to the 50S subunit in the 70S ribosome.

Located at the top of the head of the 30S subunit, it contacts several helices of the 16S rRNA. In the 70S ribosome it contacts the 23S rRNA (bridge B1a) and protein L5 of the 50S subunit (bridge B1b), connecting the 2 subunits; these bridges are implicated in subunit movement. Contacts the tRNAs in the A and P-sites. The protein is Small ribosomal subunit protein uS13 of Rickettsia typhi (strain ATCC VR-144 / Wilmington).